The chain runs to 76 residues: UPF0291 protein BA_1897/GBAA_1897/BAS1759 (76 aa).

Belongs to the UPF0291 family.

The protein resides in the cytoplasm. This Bacillus anthracis protein is UPF0291 protein BA_1897/GBAA_1897/BAS1759.